Consider the following 134-residue polypeptide: Small ribosomal subunit protein bS6 (134 aa).

Positions 103-134 (AAPVKSAEEGTEEVAAEAATEAPAETTTTVEV) are disordered. The span at 118-134 (AEAATEAPAETTTTVEV) shows a compositional bias: low complexity.

The protein belongs to the bacterial ribosomal protein bS6 family.

Its function is as follows. Binds together with bS18 to 16S ribosomal RNA. The sequence is that of Small ribosomal subunit protein bS6 from Geobacter sp. (strain M21).